The primary structure comprises 165 residues: Phosphopantetheine adenylyltransferase (165 aa).

Thr-9 contacts substrate. ATP-binding positions include 9–10 (TF) and His-17. Substrate contacts are provided by Lys-41, Leu-78, and Arg-92. ATP is bound by residues 93–95 (GLR), Glu-103, and 128–134 (HQAIASK).

This sequence belongs to the bacterial CoaD family. In terms of assembly, homohexamer. Requires Mg(2+) as cofactor.

The protein resides in the cytoplasm. The enzyme catalyses (R)-4'-phosphopantetheine + ATP + H(+) = 3'-dephospho-CoA + diphosphate. It functions in the pathway cofactor biosynthesis; coenzyme A biosynthesis; CoA from (R)-pantothenate: step 4/5. Its function is as follows. Reversibly transfers an adenylyl group from ATP to 4'-phosphopantetheine, yielding dephospho-CoA (dPCoA) and pyrophosphate. In Ruegeria sp. (strain TM1040) (Silicibacter sp.), this protein is Phosphopantetheine adenylyltransferase.